Reading from the N-terminus, the 283-residue chain is MILDGKAVSEKRLELLKEEIEESGLYPRLATVIVGEDPASQMYVRMKHRACERVGIGSIGIELPADASTEQVLEAVARLNNDPDINGILVQLPLPGGVDTTRVIDAVAPEKDVDGFHPCSLGRLFSGTPVFAPCTPQGIMTILDEYRIPIRGKRAVVVGRSIDVGRPMAALLLNADATVTICHSKTENLEDEMRRADILVSAIGKAKFVGPEMVKEGATVIDVGINQDEQGKLCGDVDFDAVKDRAGAITPVPGGVGPMTIATLMENTFRAAKLRTCGNNTVR.

Residues 159-161, S184, and I225 each bind NADP(+); that span reads GRS.

The protein belongs to the tetrahydrofolate dehydrogenase/cyclohydrolase family. As to quaternary structure, homodimer.

It catalyses the reaction (6R)-5,10-methylene-5,6,7,8-tetrahydrofolate + NADP(+) = (6R)-5,10-methenyltetrahydrofolate + NADPH. The catalysed reaction is (6R)-5,10-methenyltetrahydrofolate + H2O = (6R)-10-formyltetrahydrofolate + H(+). It participates in one-carbon metabolism; tetrahydrofolate interconversion. Catalyzes the oxidation of 5,10-methylenetetrahydrofolate to 5,10-methenyltetrahydrofolate and then the hydrolysis of 5,10-methenyltetrahydrofolate to 10-formyltetrahydrofolate. The polypeptide is Bifunctional protein FolD (Methanoculleus marisnigri (strain ATCC 35101 / DSM 1498 / JR1)).